The chain runs to 72 residues: UPF0346 protein EF_1680 (72 aa).

It belongs to the UPF0346 family.

The chain is UPF0346 protein EF_1680 from Enterococcus faecalis (strain ATCC 700802 / V583).